A 536-amino-acid chain; its full sequence is ADP,ATP carrier protein 4 (536 aa).

9 consecutive transmembrane segments (helical) span residues 44-64, 77-97, 109-129, 172-194, 205-225, 244-264, 309-329, 349-369, and 378-398; these read VLLF…LYVL, SILF…IVIV, MLEV…FVIW, TMLY…FSRA, KFLP…GLLT, FSQV…TSFF, VVAA…GIVL, AQII…THLI, and AITA…MVFF. N400 and N421 each carry an N-linked (GlcNAc...) asparagine glycan. 2 consecutive transmembrane segments (helical) span residues 465–485 and 493–513; these read LGIN…TVVF and VVSV…RSIL.

Belongs to the ADP/ATP translocase tlc family.

It localises to the cell membrane. Its function is as follows. ATP transporter involved in the uptake of ATP from the host cell cytoplasm. Provides the microsporidian cell with host ATP in exchange for ADP. This is an obligate exchange system. This energy acquiring activity is an important component of microsporidian parasitism. This Encephalitozoon cuniculi (strain GB-M1) (Microsporidian parasite) protein is ADP,ATP carrier protein 4 (NTT4).